A 237-amino-acid polypeptide reads, in one-letter code: Ribosomal RNA small subunit methyltransferase G (237 aa).

Residues glycine 78, phenylalanine 83, 129–130 (AE), and arginine 148 each bind S-adenosyl-L-methionine. Residues 216–237 (SKKKETPNKYPRKAGTPNKKPL) form a disordered region.

The protein belongs to the methyltransferase superfamily. RNA methyltransferase RsmG family.

Its subcellular location is the cytoplasm. In terms of biological role, specifically methylates the N7 position of a guanine in 16S rRNA. In Streptococcus agalactiae serotype V (strain ATCC BAA-611 / 2603 V/R), this protein is Ribosomal RNA small subunit methyltransferase G.